We begin with the raw amino-acid sequence, 29 residues long: U20-ctenitoxin-Co1a (29 aa).

2 disulfides stabilise this stretch: C3-C16 and C10-C21.

In terms of tissue distribution, expressed by the venom gland.

Its subcellular location is the secreted. The polypeptide is U20-ctenitoxin-Co1a (Ctenus ornatus (Brazilian spider)).